A 295-amino-acid chain; its full sequence is MVLPSMNKSVEAISNNHLQQPNKFPLINGLADVRDYYVANCLLFKLNKGSLRIENEFGEFIERSAPCLFLLEKDQTITLSMSEIEGHIDFSSLEVSYDLMQKFYKVFYSTRNYNDRELSLKTKPKYFFHADLLPGMSDTFDSILHGVACPRVCSNVSIDDHDYSYFSLMYLISAFVRKPGGFDFLERAIKITTKEKVYNIIISDLTRKWSQAEVAGKLFMSVSSLKRKLAAEEVSFSKIYLDARMNQAIKLLRMGAGNISQVATMCGYDTPSYFIAIFKRHFKITPLSFMRTMNH.

An HTH araC/xylS-type domain is found at 195-292 (EKVYNIIISD…KITPLSFMRT (98 aa)). DNA-binding regions (H-T-H motif) lie at residues 212 to 233 (AEVA…AAEE) and 259 to 282 (ISQV…KRHF).

In terms of biological role, positive regulator of the expression of the invasion-associated type III secretion system encoded within SPI-1 (pathogenicity island 1). In Salmonella typhimurium (strain SL1344), this protein is Transcriptional regulator SirC (sirC).